Consider the following 613-residue polypeptide: Tetratricopeptide repeat protein 39A (613 aa).

3 TPR repeats span residues 315–348 (AIFL…QQHW), 505–538 (CLVK…EKKI), and 546–579 (PNAL…YKNY).

Belongs to the TTC39 family.

The protein is Tetratricopeptide repeat protein 39A (TTC39A) of Homo sapiens (Human).